Consider the following 200-residue polypeptide: MSMRTARLERSTSESSVLVEVNLDGTGKSEIETTVPFYNHMLTALSKHSLIDLRVKASGDTDIDVHHTVEDVAITLGEVLRTALGDKAGIRRFGEATIPLDEALAHAVVDVSGRPYLVHSGEPAGQEYHLIGGHFTGSLTRHVFEAITLHAQICLHMRVLAGRDPHHIVEAQFKAFARALRSAVESDPRVDGIPSTKGLL.

This sequence belongs to the imidazoleglycerol-phosphate dehydratase family.

Its subcellular location is the cytoplasm. The catalysed reaction is D-erythro-1-(imidazol-4-yl)glycerol 3-phosphate = 3-(imidazol-4-yl)-2-oxopropyl phosphate + H2O. The protein operates within amino-acid biosynthesis; L-histidine biosynthesis; L-histidine from 5-phospho-alpha-D-ribose 1-diphosphate: step 6/9. The protein is Imidazoleglycerol-phosphate dehydratase of Renibacterium salmoninarum (strain ATCC 33209 / DSM 20767 / JCM 11484 / NBRC 15589 / NCIMB 2235).